The sequence spans 98 residues: MDSFDAPDRYVSFKGIDCEGNSRRIIDRLHMHIDDPAKTNAFWERFRAKLAIAEDPLKRQADGLCLLCANIYYIADLFEEHDDEDGLAMLRQLEDECC.

The protein belongs to the CowN family.

Its function is as follows. Is required to sustain N(2)-dependent growth in the presence of low levels of carbon monoxide (CO). Probably acts by protecting the N(2) fixation ability of the nitrogenase complex, which is inactivated in the presence of CO. This is N(2)-fixation sustaining protein CowN from Azospirillum sp. (strain B510).